The chain runs to 404 residues: Transcriptional repressor OPI1 (404 aa).

Phosphoserine is present on S10. Residues 25 to 51 (QSCRQKSQPSEDVSQADKMPASESSTT) are disordered. The segment covering 26 to 37 (SCRQKSQPSEDV) has biased composition (polar residues). The basic motif stretch occupies residues 109-138 (KRQKLSRAIAKGKDNLKEYKLNMSIESKKR). Positions 139–160 (LVTCLHLLKLANKQLSDKISCL) are leucine-zipper. Disordered stretches follow at residues 170 to 201 (HPLHKQDGNARTTTGAGEDETSSDEDDDDEEF), 305 to 327 (LQQQQQKRNKDGDDSASPSSSVT), and 378 to 404 (QQQQYRQQQQKDGNYVKPSQDNVDSKD). Residues 186–201 (GEDETSSDEDDDDEEF) show a composition bias toward acidic residues. The FFAT motif lies at 200-206 (EFFDASE). Positions 378-387 (QQQQYRQQQQ) are enriched in low complexity. The segment covering 394–404 (KPSQDNVDSKD) has biased composition (polar residues).

Interacts with SCS2.

The protein localises to the endoplasmic reticulum. The protein resides in the nucleus. In terms of biological role, negative regulator of the transcriptional complex INO2-INO4 in response to phospholipid precursor availability. When precursors become limiting, OPI1 is retained at the endoplasmic reticulum (ER) and INO2-INO4 activates INO1 and other genes required for phospholipid biosynthesis, whereas abundant precursor availability results in targeting of OPI1 to the nucleus to repress transcription of these genes. Binds directly to phosphatidic acid, which is required for ER targeting and may act as sensing mechanism for precursor availability, as phosphatidic acid becomes rapidly depleted upon phospholipid biosynthesis. In Saccharomyces cerevisiae (strain ATCC 204508 / S288c) (Baker's yeast), this protein is Transcriptional repressor OPI1 (OPI1).